Here is a 260-residue protein sequence, read N- to C-terminus: Global transcriptional regulator CodY (260 aa).

The segment at 1 to 159 (MPNLLEKTRK…SSTVVGIQLL (159 aa)) is GAF domain. The segment at residues 207–226 (ASVIADRIGITRSVIVNALR) is a DNA-binding region (H-T-H motif).

This sequence belongs to the CodY family.

The protein localises to the cytoplasm. Functionally, DNA-binding global transcriptional regulator which is involved in the adaptive response to starvation and acts by directly or indirectly controlling the expression of numerous genes in response to nutrient availability. During rapid exponential growth, CodY is highly active and represses genes whose products allow adaptation to nutrient depletion. The protein is Global transcriptional regulator CodY of Streptococcus pyogenes serotype M4 (strain MGAS10750).